Reading from the N-terminus, the 239-residue chain is Ribitol-5-phosphate cytidylyltransferase (239 aa).

CTP is bound by residues 7–10 and 80–86; these read FAGG and GETGQMS.

This sequence belongs to the IspD/TarI cytidylyltransferase family. TarI subfamily.

The enzyme catalyses D-ribitol 5-phosphate + CTP + H(+) = CDP-L-ribitol + diphosphate. The protein operates within cell wall biogenesis; poly(ribitol phosphate) teichoic acid biosynthesis. In terms of biological role, catalyzes the transfer of the cytidylyl group of CTP to D-ribitol 5-phosphate. The protein is Ribitol-5-phosphate cytidylyltransferase of Streptococcus agalactiae serotype Ia (strain ATCC 27591 / A909 / CDC SS700).